A 371-amino-acid chain; its full sequence is Ecto-ADP-ribosyltransferase 3 (371 aa).

A signal peptide spans 1–26; it reads MKMGHFEMVTTLLAAAVLMDIFQVKA. A disulfide bridge links Cys43 with Cys255. Residues 64–250 form the TR mART core domain; the sequence is ALLRMVWDNA…LVLQSINSTC (187 aa). The NAD(+) site is built by Tyr101 and Asn182. A disordered region spans residues 306–346; sequence VLQTEENPLLPDEKPDRSRGKANNPTPGLVPGPKSHPSASS. Ser345 is lipidated: GPI-anchor amidated serine. A propeptide spans 346-371 (removed in mature form); the sequence is SGNTLLPSVMASTILLVASAVNFIEL.

It belongs to the Arg-specific ADP-ribosyltransferase family.

The protein localises to the cell membrane. The catalysed reaction is L-arginyl-[protein] + NAD(+) = N(omega)-(ADP-D-ribosyl)-L-arginyl-[protein] + nicotinamide + H(+). This is Ecto-ADP-ribosyltransferase 3 (Art3) from Mus musculus (Mouse).